Here is a 192-residue protein sequence, read N- to C-terminus: C-X-C chemokine receptor type 4 (192 aa).

Residue tyrosine 1 is modified to Sulfotyrosine. The important for chemokine binding and signaling stretch occupies residues 1-11 (YTEDDLGSGDY). At 1–28 (YTEDDLGSGDYDSMKEPCFREENAHFNR) the chain is on the extracellular side. The O-linked (Xyl...) (chondroitin sulfate) serine glycan is linked to serine 8. The residue at position 11 (tyrosine 11) is a Sulfotyrosine. Residues 29 to 53 (IFLPTVYSIIFLTGIVGNGLVILVM) traverse the membrane as a helical segment. Residues 54-67 (GYQKKLRSMTDKYR) lie on the Cytoplasmic side of the membrane. A helical membrane pass occupies residues 68 to 89 (LHLSVADLLFVLTLPFWAVDAV). Positions 84–87 (WAVD) are chemokine binding. Over 90-100 (ANWYFGQFLCK) the chain is Extracellular. An intrachain disulfide couples cysteine 99 to cysteine 176. Residues 101–120 (AVHVIYTVNLYSSVLILAFI) form a helical membrane-spanning segment. The interval 103 to 107 (HVIYT) is chemokine binding. Topologically, residues 121–144 (SLDRYLAIVHATNSQRPRKLLAEK) are cytoplasmic. The short motif at 123-125 (DRY) is the Important for signaling element. The segment at 125 to 137 (YLAIVHATNSQRP) is involved in dimerization; when bound to chemokine. The chain crosses the membrane as a helical span at residues 145-164 (VVYVGVWLPAVLLTIPDLIF). Over 165-185 (ADIKEADERYICDRFYPSDLW) the chain is Extracellular. The tract at residues 176 to 180 (CDRFY) is chemokine binding, important for signaling. Residues 186 to 192 (LVVFQFQ) traverse the membrane as a helical segment.

The protein belongs to the G-protein coupled receptor 1 family. As to quaternary structure, monomer. Can form homodimers. Interacts with CD164. Interacts with ARRB2; the interaction is dependent on the C-terminal phosphorylation of CXCR4 and allows activation of MAPK1 and MAPK3. Interacts with ARR3; the interaction is dependent on the C-terminal phosphorylation of CXCR4 and modulates calcium mobilization. Interacts with RNF113A; the interaction, enhanced by CXCL12, promotes CXCR4 ubiquitination and subsequent degradation. Interacts (via the cytoplasmic C-terminal) with ITCH (via the WW domains I and II); the interaction, enhanced by CXCL12, promotes CXCR4 ubiquitination and leads to its degradation. Interacts with extracellular ubiquitin. Interacts with DBN1; this interaction is enhanced by antigenic stimulation. Following LPS binding, may form a complex with GDF5, HSP90AA1 and HSPA8. In terms of processing, phosphorylated on agonist stimulation. Rapidly phosphorylated on serine and threonine residues in the C-terminal. Post-translationally, ubiquitinated after ligand binding, leading to its degradation. Ubiquitinated by ITCH at the cell membrane on agonist stimulation. The ubiquitin-dependent mechanism, endosomal sorting complex required for transport (ESCRT), then targets CXCR4 for lysosomal degradation. This process is dependent also on prior Ser-/Thr-phosphorylation in the C-terminal of CXCR4. Also binding of ARRB1 to STAM negatively regulates CXCR4 sorting to lysosomes though modulating ubiquitination of SFR5S. Sulfation is required for efficient binding of CXCL12/SDF-1alpha and promotes its dimerization. In terms of processing, O- and N-glycosylated. N-glycosylation can mask coreceptor function. The O-glycosylation chondroitin sulfate attachment does not affect interaction with CXCL12/SDF-1alpha nor its coreceptor activity.

The protein resides in the cell membrane. Its subcellular location is the cell junction. It localises to the early endosome. The protein localises to the late endosome. It is found in the lysosome. In terms of biological role, receptor for the C-X-C chemokine CXCL12/SDF-1 that transduces a signal by increasing intracellular calcium ion levels and enhancing MAPK1/MAPK3 activation. Involved in the AKT signaling cascade. Plays a role in regulation of cell migration, e.g. during wound healing. Acts as a receptor for extracellular ubiquitin; leading to enhanced intracellular calcium ions and reduced cellular cAMP levels. Binds bacterial lipopolysaccharide (LPS) et mediates LPS-induced inflammatory response, including TNF secretion by monocytes. Involved in hematopoiesis and in cardiac ventricular septum formation. Also plays an essential role in vascularization of the gastrointestinal tract, probably by regulating vascular branching and/or remodeling processes in endothelial cells. Involved in cerebellar development. In the CNS, could mediate hippocampal-neuron survival. The polypeptide is C-X-C chemokine receptor type 4 (CXCR4) (Ovis aries (Sheep)).